The primary structure comprises 209 residues: uncharacterized protein (209 aa).

Disordered stretches follow at residues Met-1–Glu-80 and Leu-164–Glu-197. Residues Ser-178–Arg-189 show a composition bias toward low complexity.

This is an uncharacterized protein from Homo sapiens (Human).